The sequence spans 499 residues: uncharacterized protein (499 aa).

Residues 6-35 and 272-282 each bind FAD; these read EAVI…VIER and YRDGRIFLAGD.

This sequence belongs to the PheA/TfdB FAD monooxygenase family. The cofactor is FAD.

This is an uncharacterized protein from Bacillus subtilis (strain 168).